The chain runs to 283 residues: Protein/nucleic acid deglycase HchA (283 aa).

The Zn(2+) site is built by His-86, Glu-91, and His-123. The active-site Nucleophile is the Cys-185.

The protein belongs to the peptidase C56 family. HchA subfamily. Homodimer.

It is found in the cytoplasm. The enzyme catalyses N(omega)-(1-hydroxy-2-oxopropyl)-L-arginyl-[protein] + H2O = lactate + L-arginyl-[protein] + H(+). It carries out the reaction N(6)-(1-hydroxy-2-oxopropyl)-L-lysyl-[protein] + H2O = lactate + L-lysyl-[protein] + H(+). It catalyses the reaction S-(1-hydroxy-2-oxopropyl)-L-cysteinyl-[protein] + H2O = lactate + L-cysteinyl-[protein] + H(+). The catalysed reaction is N(omega)-(1-hydroxy-2-oxoethyl)-L-arginyl-[protein] + H2O = L-arginyl-[protein] + glycolate + H(+). The enzyme catalyses N(6)-(1-hydroxy-2-oxoethyl)-L-lysyl-[protein] + H2O = glycolate + L-lysyl-[protein] + H(+). It carries out the reaction S-(1-hydroxy-2-oxoethyl)-L-cysteinyl-[protein] + H2O = glycolate + L-cysteinyl-[protein] + H(+). It catalyses the reaction N(2)-(1-hydroxy-2-oxopropyl)-dGTP + H2O = lactate + dGTP + H(+). The catalysed reaction is N(2)-(1-hydroxy-2-oxopropyl)-GTP + H2O = lactate + GTP + H(+). The enzyme catalyses N(2)-(1-hydroxy-2-oxopropyl)-GDP + H2O = lactate + GDP + H(+). It carries out the reaction N(2)-(1-hydroxy-2-oxopropyl)-GMP + H2O = lactate + GMP + H(+). It catalyses the reaction N(2)-(1-hydroxy-2-oxoethyl)-dGTP + H2O = dGTP + glycolate + H(+). The catalysed reaction is N(2)-(1-hydroxy-2-oxoethyl)-GTP + H2O = glycolate + GTP + H(+). The enzyme catalyses N(2)-(1-hydroxy-2-oxoethyl)-GDP + H2O = glycolate + GDP + H(+). It carries out the reaction N(2)-(1-hydroxy-2-oxoethyl)-GMP + H2O = glycolate + GMP + H(+). It catalyses the reaction an N(2)-(1-hydroxy-2-oxopropyl)-guanosine in RNA + H2O = a guanosine in RNA + lactate + H(+). The catalysed reaction is an N(2)-(1-hydroxy-2-oxopropyl)-2'-deoxyguanosine in DNA + H2O = a 2'-deoxyguanosine in DNA + lactate + H(+). The enzyme catalyses an N(2)-(1-hydroxy-2-oxoethyl)-guanosine in RNA + H2O = a guanosine in RNA + glycolate + H(+). It carries out the reaction an N(2)-(1-hydroxy-2-oxoethyl)-2'-deoxyguanosine in DNA + H2O = a 2'-deoxyguanosine in DNA + glycolate + H(+). In terms of biological role, protein and nucleotide deglycase that catalyzes the deglycation of the Maillard adducts formed between amino groups of proteins or nucleotides and reactive carbonyl groups of glyoxals. Thus, functions as a protein deglycase that repairs methylglyoxal- and glyoxal-glycated proteins, and releases repaired proteins and lactate or glycolate, respectively. Deglycates cysteine, arginine and lysine residues in proteins, and thus reactivates these proteins by reversing glycation by glyoxals. Acts on early glycation intermediates (hemithioacetals and aminocarbinols), preventing the formation of Schiff bases and advanced glycation endproducts (AGE). Also functions as a nucleotide deglycase able to repair glycated guanine in the free nucleotide pool (GTP, GDP, GMP, dGTP) and in DNA and RNA. Is thus involved in a major nucleotide repair system named guanine glycation repair (GG repair), dedicated to reversing methylglyoxal and glyoxal damage via nucleotide sanitization and direct nucleic acid repair. Plays an important role in protecting cells from carbonyl stress. The polypeptide is Protein/nucleic acid deglycase HchA (Shigella sonnei (strain Ss046)).